The primary structure comprises 313 residues: Beta-lactamase FAR-1 (313 aa).

A signal peptide spans 1–28 (MPGVDISFLKKSGRRTMAAAAVIALLGG). The N-palmitoyl cysteine moiety is linked to residue cysteine 29. Cysteine 29 is lipidated: S-diacylglycerol cysteine. Catalysis depends on serine 94, which acts as the Acyl-ester intermediate. Serine 154 serves as a coordination point for substrate. Glutamate 190 functions as the Proton acceptor in the catalytic mechanism. A substrate-binding site is contributed by 258 to 260 (KTG).

The protein belongs to the class-A beta-lactamase family.

It localises to the cell membrane. The catalysed reaction is a beta-lactam + H2O = a substituted beta-amino acid. Inhibited by clavulanic acid, and at a low level by tazobactam and sulbactam. Its function is as follows. Confers high levels of resistance to amoxicillin, benzylpenicillin, piperacillin, ticarcillin and cephalothin. Also hydrolyzes aztreonam at a low level. Not active against ceftazidime, cefotaxime and imipenem. This Nocardia farcinica (strain IFM 10152) protein is Beta-lactamase FAR-1 (bla).